A 419-amino-acid chain; its full sequence is O-methyltransferase desB (419 aa).

S-adenosyl-L-methionine-binding positions include glycine 255–glycine 256, aspartate 280, aspartate 306–phenylalanine 307, and arginine 323. The Proton acceptor role is filled by histidine 326.

This sequence belongs to the class I-like SAM-binding methyltransferase superfamily. Cation-independent O-methyltransferase family. S-adenosyl-L-methionine is required as a cofactor.

It functions in the pathway secondary metabolite biosynthesis. Its function is as follows. Non-reducing polyketide synthase; part of the gene cluster that mediates the biosynthesis of the bicoumarin desertorin. The non-reducing polyketide synthase desS first catalyzes the formation of the pentaketidic 4,7-dihydroxy-5-methylcoumarin from acetyl coenzyme A and 4 malonyl coenzyme A molecules. Further O-methylation by desB leads to the formation of 7-demethylsiderin. Then, an oxidative phenol coupling catalyzed by the cytochrome P450 monooxygenase desC forms the 6,8'-dimer M-desertorin A via dimerization the monomeric precursor, 7-demethylsiderin. M-desertorin A is further converted to M-desertorin C. In Aspergillus desertorum (Emericella desertorum), this protein is O-methyltransferase desB.